Consider the following 524-residue polypeptide: RNA-splicing ligase RtcB homolog 1 (524 aa).

Mn(2+) contacts are provided by Asp141, Cys144, His249, His281, and His372. 248 to 252 (NHYLE) contributes to the GMP binding site. GMP contacts are provided by residues 372-373 (HN), 421-424 (GGSM), Ser428, 447-450 (HGAG), and Lys523. The GMP-histidine intermediate role is filled by His447.

This sequence belongs to the RtcB family. In terms of assembly, catalytic component of the tRNA-splicing ligase complex. Mn(2+) is required as a cofactor.

The catalysed reaction is a 3'-end 3'-phospho-ribonucleotide-RNA + a 5'-end dephospho-ribonucleoside-RNA + GTP = a ribonucleotidyl-ribonucleotide-RNA + GMP + diphosphate. It carries out the reaction a 3'-end 2',3'-cyclophospho-ribonucleotide-RNA + a 5'-end dephospho-ribonucleoside-RNA + GTP + H2O = a ribonucleotidyl-ribonucleotide-RNA + GMP + diphosphate + H(+). Its function is as follows. Catalytic subunit of the tRNA-splicing ligase complex that acts by directly joining spliced tRNA halves to mature-sized tRNAs by incorporating the precursor-derived splice junction phosphate into the mature tRNA as a canonical 3',5'-phosphodiester. May act as an RNA ligase with broad substrate specificity, and may function toward other RNAs. The chain is RNA-splicing ligase RtcB homolog 1 from Entamoeba histolytica (strain ATCC 30459 / HM-1:IMSS / ABRM).